The primary structure comprises 290 residues: S-adenosylmethionine-dependent nucleotide dehydratase (290 aa).

The region spanning 6 to 226 is the Radical SAM core domain; that stretch reads SGNNIIPSVN…VNRHSKNKFL (221 aa). Residues cysteine 22, cysteine 26, and cysteine 29 each coordinate [4Fe-4S] cluster.

The protein belongs to the radical SAM superfamily. Viperin family. Requires [4Fe-4S] cluster as cofactor.

The enzyme catalyses UTP + AH2 + S-adenosyl-L-methionine = 3'-deoxy-3',4'-didehydro-UTP + 5'-deoxyadenosine + L-methionine + A + H2O + H(+). In terms of biological role, expression of pVip47 in E.coli (strain MG1655) confers resistance to phage P1; has no effect against T7. Catalyzes the conversion of uridine triphosphate (UTP) to 3'-deoxy-3',4'-didehydro-UTP (ddhUTP), probably via a SAM-dependent radical mechanism. The modified nucleotide represses transcription from T7 RNA polymerase-directed genes (possibly by acting as chain terminators), strongly suggesting these nucleotides block viral polymerase transcription. How this protein allows bacteria to resist viruses that do not encode their own RNA polymerase (such as lambda, P1) is unknown. The polypeptide is S-adenosylmethionine-dependent nucleotide dehydratase (Flammeovirga pacifica).